A 247-amino-acid polypeptide reads, in one-letter code: Probable transcriptional regulatory protein TDE_1487 (247 aa).

This sequence belongs to the TACO1 family.

It is found in the cytoplasm. The protein is Probable transcriptional regulatory protein TDE_1487 of Treponema denticola (strain ATCC 35405 / DSM 14222 / CIP 103919 / JCM 8153 / KCTC 15104).